The following is a 95-amino-acid chain: Aspartyl/glutamyl-tRNA(Asn/Gln) amidotransferase subunit C (95 aa).

The protein belongs to the GatC family. In terms of assembly, heterotrimer of A, B and C subunits.

It catalyses the reaction L-glutamyl-tRNA(Gln) + L-glutamine + ATP + H2O = L-glutaminyl-tRNA(Gln) + L-glutamate + ADP + phosphate + H(+). The enzyme catalyses L-aspartyl-tRNA(Asn) + L-glutamine + ATP + H2O = L-asparaginyl-tRNA(Asn) + L-glutamate + ADP + phosphate + 2 H(+). In terms of biological role, allows the formation of correctly charged Asn-tRNA(Asn) or Gln-tRNA(Gln) through the transamidation of misacylated Asp-tRNA(Asn) or Glu-tRNA(Gln) in organisms which lack either or both of asparaginyl-tRNA or glutaminyl-tRNA synthetases. The reaction takes place in the presence of glutamine and ATP through an activated phospho-Asp-tRNA(Asn) or phospho-Glu-tRNA(Gln). In Brucella melitensis biotype 2 (strain ATCC 23457), this protein is Aspartyl/glutamyl-tRNA(Asn/Gln) amidotransferase subunit C.